Consider the following 489-residue polypeptide: 3-octaprenyl-4-hydroxybenzoate carboxy-lyase (489 aa).

Mn(2+) is bound at residue Asn172. Residues Ile175 to Arg177, Arg189 to Leu191, and Arg194 to Gly195 each bind prenylated FMN. Position 238 (Glu238) interacts with Mn(2+). The active-site Proton donor is the Asp287.

The protein belongs to the UbiD family. As to quaternary structure, homohexamer. It depends on prenylated FMN as a cofactor. Mn(2+) serves as cofactor.

The protein localises to the cell membrane. It catalyses the reaction a 4-hydroxy-3-(all-trans-polyprenyl)benzoate + H(+) = a 2-(all-trans-polyprenyl)phenol + CO2. It participates in cofactor biosynthesis; ubiquinone biosynthesis. Its function is as follows. Catalyzes the decarboxylation of 3-octaprenyl-4-hydroxy benzoate to 2-octaprenylphenol, an intermediate step in ubiquinone biosynthesis. The chain is 3-octaprenyl-4-hydroxybenzoate carboxy-lyase from Glaesserella parasuis serovar 5 (strain SH0165) (Haemophilus parasuis).